The sequence spans 458 residues: Probable threonine--tRNA ligase, cytoplasmic (458 aa).

Residues 41–104 enclose the TGS domain; sequence DPIKITLLPD…EGDCSLEIFG (64 aa).

This sequence belongs to the class-II aminoacyl-tRNA synthetase family.

The protein resides in the cytoplasm. It carries out the reaction tRNA(Thr) + L-threonine + ATP = L-threonyl-tRNA(Thr) + AMP + diphosphate + H(+). This is Probable threonine--tRNA ligase, cytoplasmic from Arabidopsis thaliana (Mouse-ear cress).